We begin with the raw amino-acid sequence, 794 residues long: Protein sel-1 homolog 1 (794 aa).

The N-terminal stretch at 1–21 is a signal peptide; it reads MQVHVGLTLLLCAVLLSSATA. Residues 20–91 form a disordered region; sequence TASSDDESNQ…EEEVSVGEEI (72 aa). Residues 22–737 form an interaction with ERLEC1, OS9 and SYVN1 region; that stretch reads SSDDESNQDE…DIFTQLDMDQ (716 aa). The Lumenal portion of the chain corresponds to 22–738; it reads SSDDESNQDE…IFTQLDMDQL (717 aa). Composition is skewed to acidic residues over residues 23 to 32 and 62 to 77; these read SDDESNQDES and DSED…EEEE. Serine 63 bears the Phosphoserine mark. One can recognise a Fibronectin type-II domain in the interval 122–170; that stretch reads AHGEPCHFPFLFLDKEYDECTSDGRQDGRLWCATTYDYKTDEKWGFCET. 2 disulfides stabilise this stretch: cysteine 127–cysteine 153 and cysteine 141–cysteine 168. Sel1-like repeat units follow at residues 183–218, 219–254, 255–290, 291–326, 373–409, 410–446, 447–482, 483–518, and 519–554; these read AEMI…GMNH, TKAL…EEGS, PKGQ…LGGN, LIAH…NHVA, VQAQ…NAGN, SHAM…DMGN, PVGQ…EQGW, VDGQ…QGGH, and ILAF…ERGR. Residues asparagine 195 and asparagine 217 are each glycosylated (N-linked (GlcNAc...) asparagine). The N-linked (GlcNAc...) asparagine glycan is linked to asparagine 272. The important for homodimerization and oligomerization stretch occupies residues 352–537; sequence NSGMLEEDLI…MHASGTGVMR (186 aa). Asparagine 431 carries an N-linked (GlcNAc...) asparagine glycan. Asparagine 608 is a glycosylation site (N-linked (GlcNAc...) asparagine). Sel1-like repeat units lie at residues 627–662 and 664–699; these read TVAR…EQQH and AQAM…EASP. The interaction with SYVN1 stretch occupies residues 643–723; the sequence is TDVDYETAFI…VVYFLQYIRE (81 aa). The interval 738–794 is mediates retention in the endoplasmic reticulum; sequence LLGPEWDLYLMTIIALLLGTVIAYRQRQHQDVPVPRPPGPWPAPPQQEGPPEQQPPQ. Residues 739-759 traverse the membrane as a helical segment; the sequence is LGPEWDLYLMTIIALLLGTVI. Topologically, residues 760–794 are cytoplasmic; it reads AYRQRQHQDVPVPRPPGPWPAPPQQEGPPEQQPPQ. The interval 768-794 is disordered; it reads DVPVPRPPGPWPAPPQQEGPPEQQPPQ. A compositionally biased stretch (pro residues) spans 771 to 794; the sequence is VPRPPGPWPAPPQQEGPPEQQPPQ.

Belongs to the sel-1 family. Homodimer and homooligomer. May form a complex with ERLEC1, HSPA5, OS9, and SYVN1. Interacts with FOXRED2 and EDEM1. Interacts with LPL and LMF1; may stabilize the complex formed by LPL and LMF1 and thereby promote the export of LPL dimers. Component of the HRD1 complex, which comprises at least SYNV1/HRD1, DERL1/2, FAM8A1, HERPUD1/HERP, OS9, SEL1L and UBE2J1. SYNV1 assembles with SEL1L and FAM8A1 through its transmembrane domains, but interaction with its cytoplasmic domain is required to confer stability to FAM8A1 and enhance recruitment of HERPUD1. The interaction with SYNV1/HRD1 is direct. N-glycosylated.

Its subcellular location is the endoplasmic reticulum membrane. Plays a role in the endoplasmic reticulum quality control (ERQC) system also called ER-associated degradation (ERAD) involved in ubiquitin-dependent degradation of misfolded endoplasmic reticulum proteins. Enhances SYVN1 stability. Plays a role in LPL maturation and secretion. Required for normal differentiation of the pancreas epithelium, and for normal exocrine function and survival of pancreatic cells. May play a role in Notch signaling. This chain is Protein sel-1 homolog 1 (Sel1l), found in Mesocricetus auratus (Golden hamster).